Here is a 656-residue protein sequence, read N- to C-terminus: Leucine aminopeptidase 2 (656 aa).

Substrate contacts are provided by residues 173 to 175 (QLE) and 302 to 307 (PYGGME). His-331 provides a ligand contact to Zn(2+). Glu-332 serves as the catalytic Proton acceptor. His-335 and Glu-354 together coordinate Zn(2+). The active-site Proton donor is the Tyr-420.

It belongs to the peptidase M1 family. Zn(2+) serves as cofactor.

It localises to the cytoplasm. The protein resides in the nucleus. The enzyme catalyses an epoxide + H2O = an ethanediol. Functionally, aminopeptidase that preferentially cleaves di- and tripeptides. Also has low epoxide hydrolase activity (in vitro). Can hydrolyze the epoxide leukotriene LTA(4) but it forms preferentially 5,6-dihydroxy-7,9,11,14-eicosatetraenoic acid rather than the cytokine leukotriene B(4) as the product compared to the homologous mammalian enzyme (in vitro). This is Leucine aminopeptidase 2 from Vanderwaltozyma polyspora (strain ATCC 22028 / DSM 70294 / BCRC 21397 / CBS 2163 / NBRC 10782 / NRRL Y-8283 / UCD 57-17) (Kluyveromyces polysporus).